Reading from the N-terminus, the 375-residue chain is Queuine tRNA-ribosyltransferase (375 aa).

The active-site Proton acceptor is the Asp-89. Substrate-binding positions include 89-93 (DSGGF), Asp-143, Gln-187, and Gly-214. The RNA binding stretch occupies residues 245–251 (GVGKPED). Catalysis depends on Asp-264, which acts as the Nucleophile. The tract at residues 269-273 (TRNAR) is RNA binding; important for wobble base 34 recognition. Positions 302, 304, 307, and 333 each coordinate Zn(2+).

Belongs to the queuine tRNA-ribosyltransferase family. Homodimer. Within each dimer, one monomer is responsible for RNA recognition and catalysis, while the other monomer binds to the replacement base PreQ1. Zn(2+) serves as cofactor.

The catalysed reaction is 7-aminomethyl-7-carbaguanine + guanosine(34) in tRNA = 7-aminomethyl-7-carbaguanosine(34) in tRNA + guanine. It participates in tRNA modification; tRNA-queuosine biosynthesis. Catalyzes the base-exchange of a guanine (G) residue with the queuine precursor 7-aminomethyl-7-deazaguanine (PreQ1) at position 34 (anticodon wobble position) in tRNAs with GU(N) anticodons (tRNA-Asp, -Asn, -His and -Tyr). Catalysis occurs through a double-displacement mechanism. The nucleophile active site attacks the C1' of nucleotide 34 to detach the guanine base from the RNA, forming a covalent enzyme-RNA intermediate. The proton acceptor active site deprotonates the incoming PreQ1, allowing a nucleophilic attack on the C1' of the ribose to form the product. After dissociation, two additional enzymatic reactions on the tRNA convert PreQ1 to queuine (Q), resulting in the hypermodified nucleoside queuosine (7-(((4,5-cis-dihydroxy-2-cyclopenten-1-yl)amino)methyl)-7-deazaguanosine). This is Queuine tRNA-ribosyltransferase from Shigella flexneri serotype 5b (strain 8401).